We begin with the raw amino-acid sequence, 385 residues long: UPF0496 protein At3g28290 (385 aa).

The stretch at 138 to 214 forms a coiled coil; it reads KDKENDVGKK…IEMEISSRKK (77 aa). Transmembrane regions (helical) follow at residues 217-237 and 242-262; these read IISNVLFIGAFVAVAVGSMVL and VGAGVGVAGLLSLPLIAIGWV. The stretch at 267 to 294 forms a coiled coil; that stretch reads ILENKIQAREKQEEALKKAHRIANEMDK.

It belongs to the UPF0496 family. In terms of tissue distribution, widely expressed.

It localises to the membrane. This chain is UPF0496 protein At3g28290, found in Arabidopsis thaliana (Mouse-ear cress).